The following is a 126-amino-acid chain: Small ribosomal subunit protein uS13 (126 aa).

Residues 92–126 (HRMGLPVRGQRTRTNARTRRGRRQTVAGKKKAPGK) form a disordered region. Basic residues predominate over residues 101–126 (QRTRTNARTRRGRRQTVAGKKKAPGK).

It belongs to the universal ribosomal protein uS13 family. Part of the 30S ribosomal subunit. Forms a loose heterodimer with protein S19. Forms two bridges to the 50S subunit in the 70S ribosome.

In terms of biological role, located at the top of the head of the 30S subunit, it contacts several helices of the 16S rRNA. In the 70S ribosome it contacts the 23S rRNA (bridge B1a) and protein L5 of the 50S subunit (bridge B1b), connecting the 2 subunits; these bridges are implicated in subunit movement. Contacts the tRNAs in the A and P-sites. In Nostoc punctiforme (strain ATCC 29133 / PCC 73102), this protein is Small ribosomal subunit protein uS13.